Consider the following 103-residue polypeptide: N(4)-acetylcytidine amidohydrolase (103 aa).

An ASCH domain is found at 6 to 101 (ITFFQRFQDD…QTQFYVIEFK (96 aa)). Catalysis depends on Lys-21, which acts as the Proton acceptor. The Nucleophile role is filled by Thr-24. The active-site Proton donor is Glu-74.

Belongs to the N(4)-acetylcytidine amidohydrolase family.

The enzyme catalyses N(4)-acetylcytidine + H2O = cytidine + acetate + H(+). The catalysed reaction is N(4)-acetyl-2'-deoxycytidine + H2O = 2'-deoxycytidine + acetate + H(+). It carries out the reaction N(4)-acetylcytosine + H2O = cytosine + acetate + H(+). Catalyzes the hydrolysis of N(4)-acetylcytidine (ac4C). In Escherichia coli (strain K12 / MC4100 / BW2952), this protein is N(4)-acetylcytidine amidohydrolase (yqfB).